The chain runs to 612 residues: Isocitrate dehydrogenase kinase/phosphatase (612 aa).

ATP is bound by residues 327 to 333 (APGIKGL) and lysine 348. Aspartate 383 is a catalytic residue. The segment at 593–612 (AGAASNEQDAPDAGRSVRAA) is disordered.

Belongs to the AceK family.

The protein localises to the cytoplasm. It carries out the reaction L-seryl-[isocitrate dehydrogenase] + ATP = O-phospho-L-seryl-[isocitrate dehydrogenase] + ADP + H(+). Functionally, bifunctional enzyme which can phosphorylate or dephosphorylate isocitrate dehydrogenase (IDH) on a specific serine residue. This is a regulatory mechanism which enables bacteria to bypass the Krebs cycle via the glyoxylate shunt in response to the source of carbon. When bacteria are grown on glucose, IDH is fully active and unphosphorylated, but when grown on acetate or ethanol, the activity of IDH declines drastically concomitant with its phosphorylation. This chain is Isocitrate dehydrogenase kinase/phosphatase, found in Paraburkholderia xenovorans (strain LB400).